A 690-amino-acid polypeptide reads, in one-letter code: MAKKNAIQDFSGEIGIAALVVAVVALMVLPLPTMLIDALLGLNITLSVVLLMVTMYIPSATSLSAFPSLLLFTTLLRLSLNIASTKSILLHADAGHIIESFGKLVVGGNLVVGLVVFLIITTVQFIVIAKGSERVAEVGARFTLDAMPGKQMSIDADLRAGHLSPEEARKRRALLAMESQLHGGMDGAMKFVKGDAIAGLVITLVNILAGIVIGITYHNMTAGEAANRFAVLSIGDAMVSQIPSLLISVAAGVMITRVSDEEQAHKQSSLGMEIVRQLSTSARAMFTASALLMGFALVPGFPSFLFVALATLIFVFGYTLRNRAKEGDGDEGDALPALLREGSKGKAPTIAEQAPSFTVPVGVRLGAELAKGLDVPALDTAFQQGRHALAEALGLPFPGIAIWKADALQPDSYEVRVHDIPGEPVAVPDGHLLIPDLPEALRAQAVEAAGLPNHPAPHWIAPAHVAQDAALSATGQRVERVIADHVVHVLRRSAHLFVGLQETQWMLERVTTDYPGLVAEAQKAVPAQRIADVLRRLLEEQVPIRNMRAILESLVVWGPKEKDTLMLVEYVRGDLGRQIAHQATGGTRQMPAILLDLSVEQTVRQAIKPTPAGNFLTLDPQQVEAIIMRLRGIMQGNPVETPSALAIVTSMDIRRYVRRMIEPHLQALNVYSFQELGGYVDLRPVGKLVL.

6 consecutive transmembrane segments (helical) span residues 14–36 (IGIA…TMLI), 48–72 (VVLL…LLLF), 104–128 (LVVG…FIVI), 196–216 (AIAG…IGIT), 229–253 (FAVL…AAGV), and 291–315 (LLMG…LIFV).

This sequence belongs to the FHIPEP (flagella/HR/invasion proteins export pore) family.

The protein localises to the cell inner membrane. In terms of biological role, involved in the secretion of PopA, a proteinaceous elicitor of the hypersensitivity response in plants. In Ralstonia nicotianae (strain ATCC BAA-1114 / GMI1000) (Ralstonia solanacearum), this protein is Hypersensitivity response secretion protein HrcV (hrcV).